We begin with the raw amino-acid sequence, 206 residues long: 3-demethoxyubiquinol 3-hydroxylase (206 aa).

The Fe cation site is built by Glu55, Glu85, His88, Glu137, Glu169, and His172.

The protein belongs to the COQ7 family. Fe cation serves as cofactor.

It is found in the cell membrane. It carries out the reaction a 5-methoxy-2-methyl-3-(all-trans-polyprenyl)benzene-1,4-diol + AH2 + O2 = a 3-demethylubiquinol + A + H2O. It functions in the pathway cofactor biosynthesis; ubiquinone biosynthesis. In terms of biological role, catalyzes the hydroxylation of 2-nonaprenyl-3-methyl-6-methoxy-1,4-benzoquinol during ubiquinone biosynthesis. In Aromatoleum aromaticum (strain DSM 19018 / LMG 30748 / EbN1) (Azoarcus sp. (strain EbN1)), this protein is 3-demethoxyubiquinol 3-hydroxylase.